The sequence spans 59 residues: Kunitz-type serine protease inhibitor dendrotoxin E (59 aa).

The 51-residue stretch at C7–C57 folds into the BPTI/Kunitz inhibitor domain. 3 cysteine pairs are disulfide-bonded: C7–C57, C16–C40, and C32–C53.

This sequence belongs to the venom Kunitz-type family. Expressed by the venom gland.

Its subcellular location is the secreted. Serine protease inhibitor that inhibits trypsin. May also inhibit voltage-gated potassium channels (Kv). Binds transition metal ions such as copper and cobalt. In Dendroaspis polylepis polylepis (Black mamba), this protein is Kunitz-type serine protease inhibitor dendrotoxin E.